The primary structure comprises 404 residues: G1/S-specific cyclin-E2 (404 aa).

A disordered region spans residues 1–45; the sequence is MSRRSSRLQAKQQPQASQTDSPQEAQIIQAKKRKTAQDVKKRKEE. Residues 7–26 show a composition bias toward polar residues; the sequence is RLQAKQQPQASQTDSPQEAQ. Ser21 carries the post-translational modification Phosphoserine. Basic and acidic residues predominate over residues 35–45; that stretch reads TAQDVKKRKEE. Position 348 is an N6-lactoyllysine (Lys348). Ser383 bears the Phosphoserine mark. The residue at position 392 (Thr392) is a Phosphothreonine.

This sequence belongs to the cyclin family. Cyclin E subfamily. Interacts with the CDK2 (in vivo) and CDK3 (in vitro) protein kinases to form a serine/threonine kinase holoenzyme complex. The cyclin subunit imparts substrate specificity to the complex. In terms of processing, phosphorylation by CDK2 triggers its release from CDK2 and degradation via the ubiquitin proteasome pathway. Post-translationally, lactylated at Lys-348. Delactylated by SIRT3.

Its subcellular location is the nucleus. Its function is as follows. Essential for the control of the cell cycle at the late G1 and early S phase. In Bos taurus (Bovine), this protein is G1/S-specific cyclin-E2 (CCNE2).